Consider the following 375-residue polypeptide: Beta sliding clamp (375 aa).

Belongs to the beta sliding clamp family. Forms a ring-shaped head-to-tail homodimer around DNA which binds and tethers DNA polymerases and other proteins to the DNA. The DNA replisome complex has a single clamp-loading complex (3 tau and 1 each of delta, delta', psi and chi subunits) which binds 3 Pol III cores (1 core on the leading strand and 2 on the lagging strand) each with a beta sliding clamp dimer. Additional proteins in the replisome are other copies of gamma, psi and chi, Ssb, DNA helicase and RNA primase.

It is found in the cytoplasm. Functionally, confers DNA tethering and processivity to DNA polymerases and other proteins. Acts as a clamp, forming a ring around DNA (a reaction catalyzed by the clamp-loading complex) which diffuses in an ATP-independent manner freely and bidirectionally along dsDNA. Initially characterized for its ability to contact the catalytic subunit of DNA polymerase III (Pol III), a complex, multichain enzyme responsible for most of the replicative synthesis in bacteria; Pol III exhibits 3'-5' exonuclease proofreading activity. The beta chain is required for initiation of replication as well as for processivity of DNA replication. This Synechococcus elongatus (strain ATCC 33912 / PCC 7942 / FACHB-805) (Anacystis nidulans R2) protein is Beta sliding clamp (dnaN).